Consider the following 149-residue polypeptide: Large ribosomal subunit protein uL22c (149 aa).

Belongs to the universal ribosomal protein uL22 family. In terms of assembly, part of the 50S ribosomal subunit.

The protein resides in the plastid. The protein localises to the chloroplast. This protein binds specifically to 23S rRNA. In terms of biological role, the globular domain of the protein is located near the polypeptide exit tunnel on the outside of the subunit, while an extended beta-hairpin is found that lines the wall of the exit tunnel in the center of the 70S ribosome. The polypeptide is Large ribosomal subunit protein uL22c (rpl22) (Hordeum vulgare (Barley)).